We begin with the raw amino-acid sequence, 721 residues long: Polyribonucleotide nucleotidyltransferase (721 aa).

Positions 495 and 501 each coordinate Mg(2+). The KH domain maps to 562-621 (PRLLSFRIDPELIGTVIGPGGRTIKGITERTNTKIDIEDGGIVTIASHDGAAAEEAQKII). The S1 motif domain occupies 631–699 (GEVFSGSITR…NRGRINLTLR (69 aa)).

It belongs to the polyribonucleotide nucleotidyltransferase family. Mg(2+) is required as a cofactor.

Its subcellular location is the cytoplasm. It catalyses the reaction RNA(n+1) + phosphate = RNA(n) + a ribonucleoside 5'-diphosphate. Functionally, involved in mRNA degradation. Catalyzes the phosphorolysis of single-stranded polyribonucleotides processively in the 3'- to 5'-direction. The chain is Polyribonucleotide nucleotidyltransferase from Synechococcus sp. (strain CC9605).